Reading from the N-terminus, the 107-residue chain is Metallothionein-1 (107 aa).

The protein belongs to the metallothionein superfamily. Type 7 family.

Its function is as follows. The metallothioneins are involved in the cellular sequestration of toxic metal ions. Binds 12 cadmium ions per molecule. The polypeptide is Metallothionein-1 (Tetrahymena thermophila).